A 156-amino-acid chain; its full sequence is Putative increased recombination centers protein 11 (156 aa).

The chain crosses the membrane as a helical span at residues 20–42 (AALGATCLLHYLTTSLSIRFFFH).

It is found in the membrane. This chain is Putative increased recombination centers protein 11 (IRC11), found in Saccharomyces cerevisiae (strain ATCC 204508 / S288c) (Baker's yeast).